The primary structure comprises 186 residues: Trafficking protein particle complex subunit 3 (186 aa).

Belongs to the TRAPP small subunits family. BET3 subfamily. Homodimer. Part of the multisubunit TRAPP (transport protein particle) complex.

It is found in the golgi apparatus. The protein resides in the cis-Golgi network. Its subcellular location is the endoplasmic reticulum. Its function is as follows. May play a role in vesicular transport from endoplasmic reticulum to Golgi. The protein is Trafficking protein particle complex subunit 3 (trappc3) of Dictyostelium discoideum (Social amoeba).